A 490-amino-acid polypeptide reads, in one-letter code: MARFEEQKLYIGGRYVEASSGATFETINPANGEVLAKVQRASREDVERAVQSAVEGQKVWAAMTAMQRSRILRRAVDLLRERNDELAALETLDTGKPLAETRAVDIVTGADVLEYYAGLVPAIEGEQIPLRETSFVYTRREPLGVVAGIGAWNYPVQIALWKSAPALAAGNAMIFKPSEVTPLTALKLAEIYTEAGVPDGVFNVLTGSGREVGQWLTEHPLIEKISFTGGTSTGKKVMASASSSSLKEVTMELGGKSPLIIFPDADLDRAADIAVMANFFSSGQVCTNGTRVFIHRSQQARFEAKVLERVQRIRLGDPQDENTNFGPLVSFPHMESVLGYIESGKAQKARLLCGGERVTEGAFGNGAYVAPTVFTDCSDDMTIVREEIFGPVMSILVYDDEDEAIRRANDTEYGLAAGVVTQDLARAHRAIHRLEAGICWINTWGESPAEMPVGGYKQSGVGRENGLTTLAHYTRIKSVQVELGDYASVF.

Residues Thr-26, Ile-27, and Asp-93 each coordinate K(+). 150-152 provides a ligand contact to NAD(+); that stretch reads GAW. The Charge relay system role is filled by Lys-162. 176-179 serves as a coordination point for NAD(+); that stretch reads KPSE. Val-180 is a K(+) binding site. NAD(+) is bound at residue 230–233; sequence GTST. Leu-246 serves as a coordination point for K(+). Glu-252 serves as the catalytic Proton acceptor. The NAD(+) site is built by Gly-254, Cys-286, and Glu-387. The active-site Nucleophile is Cys-286. Cys-286 bears the Cysteine sulfenic acid (-SOH) mark. K(+) is bound by residues Lys-457 and Gly-460. Glu-464 serves as the catalytic Charge relay system.

It belongs to the aldehyde dehydrogenase family. In terms of assembly, dimer of dimers. K(+) is required as a cofactor.

It catalyses the reaction betaine aldehyde + NAD(+) + H2O = glycine betaine + NADH + 2 H(+). It functions in the pathway amine and polyamine biosynthesis; betaine biosynthesis via choline pathway; betaine from betaine aldehyde: step 1/1. Its function is as follows. Involved in the biosynthesis of the osmoprotectant glycine betaine. Catalyzes the irreversible oxidation of betaine aldehyde to the corresponding acid. The chain is Betaine aldehyde dehydrogenase from Pseudomonas paraeruginosa (strain DSM 24068 / PA7) (Pseudomonas aeruginosa (strain PA7)).